The following is an 846-amino-acid chain: Spindle pole body component SPC98 (846 aa).

Residues serine 124 and serine 136 each carry the phosphoserine modification.

The protein belongs to the TUBGCP family. Interacts with TUB4, SPC72 and SPC97.

It is found in the nucleus. The protein resides in the cytoplasm. Its subcellular location is the cytoskeleton. It localises to the microtubule organizing center. The protein localises to the spindle pole body. Involved in microtubule organization by the microtubule organizing center, the spindle pole body (SPB). Probably part of the microtubule attachment site at the SPB. The polypeptide is Spindle pole body component SPC98 (SPC98) (Saccharomyces cerevisiae (strain ATCC 204508 / S288c) (Baker's yeast)).